Reading from the N-terminus, the 259-residue chain is Phosphate import ATP-binding protein PstB (259 aa).

The ABC transporter domain occupies 13-254 (IAVKNLNFFY…PTRKETEDYI (242 aa)). Position 45 to 52 (45 to 52 (GPSGCGKS)) interacts with ATP.

It belongs to the ABC transporter superfamily. Phosphate importer (TC 3.A.1.7) family. In terms of assembly, the complex is composed of two ATP-binding proteins (PstB), two transmembrane proteins (PstC and PstA) and a solute-binding protein (PstS).

It localises to the cell inner membrane. It catalyses the reaction phosphate(out) + ATP + H2O = ADP + 2 phosphate(in) + H(+). Part of the ABC transporter complex PstSACB involved in phosphate import. Responsible for energy coupling to the transport system. The polypeptide is Phosphate import ATP-binding protein PstB (Albidiferax ferrireducens (strain ATCC BAA-621 / DSM 15236 / T118) (Rhodoferax ferrireducens)).